Here is a 488-residue protein sequence, read N- to C-terminus: MELYSLTIHELRELLKKREVSALEVTKSYLERIKEVEPKIDALITITEDFALQRAKEADEKIKNGEDTALTGIPVIIKDNISTEGIKTTCSSKMLENYIPPYNATVVEKLLEEGVIILGKSNLDEFAMGSSTENSAFKTTKNPWDLSRVPGGSSGGSAAAIAADEAAFALGSDTGGSIRQPASLCGVVGMKPTYGLVSRYGLVAFASSLDQIGPFTKDVTDCAIVLNTIIGHDPKDSTSLKIDKPDYTSYLKEDIKGLRIGVAKEFFGEGIEEGVKETVQESIKVLQDLGAEIIDISIPYVEYALPAYYIIASAEASSNLARYDGIRYGHIAGKYEDLIDMYMVTRSEGFGKEVKRRIMLGTYALSSGYYDAYYKKALKVRTLIKNDFEKAFEKCDVIIGPTSPTVAFKIGERANDPLAMYLADIYTVSVNIAGLPGISIPCGLSDGLPVGLQIIGRHFDEGKILNVAYAFEQANKFNAKPQAIGGAR.

Catalysis depends on charge relay system residues Lys78 and Ser153. The active-site Acyl-ester intermediate is Ser177.

Belongs to the amidase family. GatA subfamily. Heterotrimer of A, B and C subunits.

It catalyses the reaction L-glutamyl-tRNA(Gln) + L-glutamine + ATP + H2O = L-glutaminyl-tRNA(Gln) + L-glutamate + ADP + phosphate + H(+). Its function is as follows. Allows the formation of correctly charged Gln-tRNA(Gln) through the transamidation of misacylated Glu-tRNA(Gln) in organisms which lack glutaminyl-tRNA synthetase. The reaction takes place in the presence of glutamine and ATP through an activated gamma-phospho-Glu-tRNA(Gln). The chain is Glutamyl-tRNA(Gln) amidotransferase subunit A from Thermoanaerobacter pseudethanolicus (strain ATCC 33223 / 39E) (Clostridium thermohydrosulfuricum).